A 381-amino-acid polypeptide reads, in one-letter code: Alkanesulfonate monooxygenase (381 aa).

Belongs to the SsuD family. Homotetramer.

The catalysed reaction is an alkanesulfonate + FMNH2 + O2 = an aldehyde + FMN + sulfite + H2O + 2 H(+). Functionally, catalyzes the desulfonation of aliphatic sulfonates. In Citrobacter koseri (strain ATCC BAA-895 / CDC 4225-83 / SGSC4696), this protein is Alkanesulfonate monooxygenase.